Consider the following 362-residue polypeptide: L-arginine:L-lysine amidinotransferase (362 aa).

Active-site residues include aspartate 195 and histidine 244. Cysteine 346 functions as the Amidino-cysteine intermediate in the catalytic mechanism.

It belongs to the amidinotransferase family.

The catalysed reaction is L-lysine + L-arginine = L-homoarginine + L-ornithine. The enzyme catalyses L-canavanine + L-ornithine = L-canaline + L-arginine + H(+). In terms of biological role, involved in the biosynthesis of phaseolotoxin, a nonhost-specific toxin which is a key component in the development of the halo blight disease of beans. Catalyzes the transfer of an amidino group from arginine to lysine to produce one molecule of homoarginine and one molecule of ornithine, both being precursors in the biosynthesis of phaseolotoxin. Can also use L-canavanine as an alternative amidine donor with L-ornithine as amidine acceptor. The sequence is that of L-arginine:L-lysine amidinotransferase from Pseudomonas savastanoi pv. phaseolicola (Pseudomonas syringae pv. phaseolicola).